The primary structure comprises 1099 residues: ATP-dependent helicase/deoxyribonuclease subunit B (1099 aa).

Residues cysteine 766, cysteine 1056, cysteine 1059, and cysteine 1065 each coordinate [4Fe-4S] cluster.

The protein belongs to the helicase family. AddB/RexB type 2 subfamily. Heterodimer of AddA and RexB. The cofactor is Mg(2+). [4Fe-4S] cluster serves as cofactor.

In terms of biological role, the heterodimer acts as both an ATP-dependent DNA helicase and an ATP-dependent, dual-direction single-stranded exonuclease. Recognizes the chi site generating a DNA molecule suitable for the initiation of homologous recombination. This subunit has 5' -&gt; 3' nuclease activity but not helicase activity. The protein is ATP-dependent helicase/deoxyribonuclease subunit B of Lactococcus lactis subsp. lactis (strain IL1403) (Streptococcus lactis).